The chain runs to 334 residues: Protein-methionine-sulfoxide reductase catalytic subunit MsrP (334 aa).

Residues Met-1–Ala-44 constitute a signal peptide (tat-type signal). Mo-molybdopterin-binding positions include Asn-88, Tyr-91–Glu-92, Cys-146, Thr-181, Asn-233, Arg-238, and Gly-249–Lys-251.

It belongs to the MsrP family. Heterodimer of a catalytic subunit (MsrP) and a heme-binding subunit (MsrQ). Mo-molybdopterin is required as a cofactor. Post-translationally, predicted to be exported by the Tat system. The position of the signal peptide cleavage has not been experimentally proven.

It localises to the periplasm. The catalysed reaction is L-methionyl-[protein] + a quinone + H2O = L-methionyl-(S)-S-oxide-[protein] + a quinol. It carries out the reaction L-methionyl-[protein] + a quinone + H2O = L-methionyl-(R)-S-oxide-[protein] + a quinol. In terms of biological role, part of the MsrPQ system that repairs oxidized periplasmic proteins containing methionine sulfoxide residues (Met-O), using respiratory chain electrons. Thus protects these proteins from oxidative-stress damage caused by reactive species of oxygen and chlorine generated by the host defense mechanisms. MsrPQ is essential for the maintenance of envelope integrity under bleach stress, rescuing a wide series of structurally unrelated periplasmic proteins from methionine oxidation, including the primary periplasmic chaperone SurA and the lipoprotein Pal. The catalytic subunit MsrP is non-stereospecific, being able to reduce both (R-) and (S-) diastereoisomers of methionine sulfoxide. The protein is Protein-methionine-sulfoxide reductase catalytic subunit MsrP of Escherichia coli O7:K1 (strain IAI39 / ExPEC).